The sequence spans 493 residues: Cytoplasmic tRNA 2-thiolation protein 2 (493 aa).

At Ser-489 the chain carries Phosphoserine.

Belongs to the CTU2/NCS2 family. As to quaternary structure, interacts with NCS6 and URM1. May act by forming a heterodimer with NCS6.

The protein resides in the cytoplasm. It functions in the pathway tRNA modification; 5-methoxycarbonylmethyl-2-thiouridine-tRNA biosynthesis. In terms of biological role, plays a central role in 2-thiolation of mcm(5)S(2)U at tRNA wobble positions of tRNA(Lys), tRNA(Glu) and tRNA(Gln). May act by forming a heterodimer with NCS6 that ligates sulfur from thiocarboxylated URM1 onto the uridine of tRNAs at wobble position. Prior mcm(5) tRNA modification by the elongator complex is required for 2-thiolation. May also be involved in protein urmylation. The chain is Cytoplasmic tRNA 2-thiolation protein 2 from Saccharomyces cerevisiae (strain YJM789) (Baker's yeast).